The sequence spans 197 residues: Probable UbiX-like flavin prenyltransferase (197 aa).

FMN is bound by residues Gly-9–Thr-11, Ser-36, Ser-87–Thr-90, and Arg-122.

This sequence belongs to the UbiX/PAD1 family. YclB subfamily. In terms of assembly, homododecamer.

The catalysed reaction is dimethylallyl phosphate + FMNH2 = prenylated FMNH2 + phosphate. Its function is as follows. Involved in the non-oxidative decarboxylation and detoxification of phenolic derivatives under both aerobic and anaerobic conditions. Flavin prenyltransferase that catalyzes the synthesis of the prenylated FMN cofactor (prenyl-FMN) for phenolic acid decarboxylase. The polypeptide is Probable UbiX-like flavin prenyltransferase (Escherichia coli O157:H7).